A 302-amino-acid chain; its full sequence is D-alanine--D-alanine ligase (302 aa).

In terms of domain architecture, ATP-grasp spans 100 to 294 (KALFRREGLL…FPELVEKLIQ (195 aa)). Position 127-180 (127-180 (GLNYPIFVKSNIGGSSVNVHLVTNYEELFIAMEALFNAGEEVLLEEAIIGQEVT)) interacts with ATP. Residues Asp248, Glu261, and Asn263 each coordinate Mg(2+).

This sequence belongs to the D-alanine--D-alanine ligase family. Mg(2+) is required as a cofactor. The cofactor is Mn(2+).

The protein localises to the cytoplasm. It carries out the reaction 2 D-alanine + ATP = D-alanyl-D-alanine + ADP + phosphate + H(+). It functions in the pathway cell wall biogenesis; peptidoglycan biosynthesis. Functionally, cell wall formation. The protein is D-alanine--D-alanine ligase of Lawsonia intracellularis (strain PHE/MN1-00).